The sequence spans 285 residues: Glutamate racemase (285 aa).

Residues 28–29 (DS) and 60–61 (YG) contribute to the substrate site. The Proton donor/acceptor role is filled by C92. 93–94 (NT) lines the substrate pocket. Residue C204 is the Proton donor/acceptor of the active site. 205-206 (TH) is a substrate binding site.

It belongs to the aspartate/glutamate racemases family.

The enzyme catalyses L-glutamate = D-glutamate. It functions in the pathway cell wall biogenesis; peptidoglycan biosynthesis. Provides the (R)-glutamate required for cell wall biosynthesis. The chain is Glutamate racemase from Shigella flexneri serotype 5b (strain 8401).